The chain runs to 179 residues: Ribosome maturation factor RimM (179 aa).

Positions Lys100–Leu176 constitute a PRC barrel domain.

This sequence belongs to the RimM family. In terms of assembly, binds ribosomal protein uS19.

It is found in the cytoplasm. In terms of biological role, an accessory protein needed during the final step in the assembly of 30S ribosomal subunit, possibly for assembly of the head region. Essential for efficient processing of 16S rRNA. May be needed both before and after RbfA during the maturation of 16S rRNA. It has affinity for free ribosomal 30S subunits but not for 70S ribosomes. The polypeptide is Ribosome maturation factor RimM (Prochlorococcus marinus (strain MIT 9215)).